Reading from the N-terminus, the 271-residue chain is NADPH-dependent 7-cyano-7-deazaguanine reductase (271 aa).

Residue 81-83 coordinates substrate; the sequence is IES. 83-84 is an NADPH binding site; the sequence is SK. Cys-177 functions as the Thioimide intermediate in the catalytic mechanism. Asp-184 serves as the catalytic Proton donor. 216 to 217 is a binding site for substrate; that stretch reads HE. 245–246 lines the NADPH pocket; it reads RG.

The protein belongs to the GTP cyclohydrolase I family. QueF type 2 subfamily. Homodimer.

The protein localises to the cytoplasm. It catalyses the reaction 7-aminomethyl-7-carbaguanine + 2 NADP(+) = 7-cyano-7-deazaguanine + 2 NADPH + 3 H(+). It participates in tRNA modification; tRNA-queuosine biosynthesis. Functionally, catalyzes the NADPH-dependent reduction of 7-cyano-7-deazaguanine (preQ0) to 7-aminomethyl-7-deazaguanine (preQ1). The chain is NADPH-dependent 7-cyano-7-deazaguanine reductase from Xanthomonas axonopodis pv. citri (strain 306).